The following is a 398-amino-acid chain: Protochlorophyllide reductase, chloroplastic (398 aa).

A chloroplast-targeting transit peptide spans 1–64 (MALQAASLVS…NQQIGAIRAQ (64 aa)).

It belongs to the short-chain dehydrogenases/reductases (SDR) family. POR subfamily.

The protein localises to the plastid. The protein resides in the chloroplast. The enzyme catalyses chlorophyllide a + NADP(+) = protochlorophyllide a + NADPH + H(+). Its pathway is porphyrin-containing compound metabolism; chlorophyll biosynthesis. Functionally, phototransformation of protochlorophyllide (Pchlide) to chlorophyllide (Chlide). In Cucumis sativus (Cucumber), this protein is Protochlorophyllide reductase, chloroplastic (PORA).